The chain runs to 143 residues: AP-2 complex subunit sigma (143 aa).

This sequence belongs to the adaptor complexes small subunit family. As to quaternary structure, adaptor protein complex 2 (AP-2) is a heterotetramer composed of two large adaptins (alpha-type subunit apl3 and beta-type subunit apl1), a medium chain (mu-type subunit apm4) and a small adaptin (sigma-type subunit aps2).

It is found in the cell membrane. The protein localises to the membrane. It localises to the coated pit. In terms of biological role, component of the adaptor complexes which link clathrin to receptors in coated vesicles. Clathrin-associated protein complexes are believed to interact with the cytoplasmic tails of membrane proteins, leading to their selection and concentration. This Schizosaccharomyces pombe (strain 972 / ATCC 24843) (Fission yeast) protein is AP-2 complex subunit sigma (aps2).